A 1363-amino-acid chain; its full sequence is Homeobox protein 13 (1363 aa).

Positions 15–73 (FVMEQIQQQQQQQQQQQQQQQQQQQQQQQQQQQQLQQQQQQQQQQQQQQQQQQQQQQQN) form a coiled coil. 9 disordered regions span residues 66-96 (QQQQQQQNPKMNNQPNETRLPSPPLLNSTVP), 120-177 (SQHA…INGS), 308-437 (INGT…YHGG), 621-731 (LNSP…QHQQ), 765-818 (HHHH…PQHS), 857-911 (SINS…SNSI), 1001-1137 (QNYN…TLIN), 1166-1202 (NFINNNSNNNNNMEIDDDDEDGIDGIEGEDDSKKRMR), and 1270-1341 (ISFG…TLIS). Positions 73–96 (NPKMNNQPNETRLPSPPLLNSTVP) are enriched in polar residues. Residues 132–147 (SLNSSNNNNNNNFNNS) show a composition bias toward low complexity. The segment covering 148-158 (RPTFSSCSGNS) has biased composition (polar residues). Composition is skewed to low complexity over residues 159-177 (NNTTTTTTTTTTTNPINGS) and 315-326 (SNHSNNNNNNNN). Basic residues predominate over residues 327 to 339 (NHHHHHHHHHQKR). A compositionally biased stretch (low complexity) spans 348–378 (TNHLTPLPLLHKHTNNNNNINNNNNHNHNNI). The segment covering 379 to 393 (LGSPNQLNRSQDFTS) has biased composition (polar residues). Composition is skewed to low complexity over residues 394–408 (KNNNINNNNNNNNKI), 415–426 (NKGSPNQNSSEN), 641–693 (NNNS…NNNI), 709–731 (HHQQQLQHQQHQQQQLLHQQHQQ), and 770–793 (QQQQQQQQQQQHNNNNNNNNSNHN). The stretch at 738–789 (QQQLQIQYQQQQTHNNNLNQTQQLYYNHHHHQQQQQQQQQQQQHNNNNNNNN) forms a coiled coil. Polar residues-rich tracts occupy residues 794–818 (SVLTSPPLSQFPKTPLQLSQTPQHS) and 857–883 (SINSNSGMSLPMISSPSPNLSHMQKNR). Low complexity-rich tracts occupy residues 889–911 (ILNSSLSSSNTTNSATTSSSNSI), 1001–1031 (QNYNENNNNNNNNNNNNYNINNINNNNNNNF), and 1045–1063 (NINNNNNNNNNNNNNNNNN). The segment covering 1064 to 1078 (KNDKNESEFESKEKL) has biased composition (basic and acidic residues). Residues 1081 to 1095 (PFGSSIPNIVNNEQL) are compositionally biased toward polar residues. Composition is skewed to low complexity over residues 1096–1116 (SPYSQQSLSSSSSENPSPQWS), 1123–1137 (TSSSKLSNSTSTLIN), and 1166–1177 (NFINNNSNNNNN). Residues 1179–1195 (EIDDDDEDGIDGIEGED) show a composition bias toward acidic residues. Residues 1198–1261 (KKRMRKTTRP…NRRTKDKLKN (64 aa)) constitute a DNA-binding region (homeobox). Positions 1275 to 1294 (SSTSSTQTSTNSPSSQLSPL) are enriched in low complexity. Over residues 1297-1316 (NMNNNDQQSISTPSLILSQI) the composition is skewed to polar residues. The segment covering 1317 to 1334 (NNNQNNNQNNNNNNNTNN) has biased composition (low complexity).

It is found in the nucleus. Putative transcription factor. This is Homeobox protein 13 (hbx13) from Dictyostelium discoideum (Social amoeba).